The chain runs to 273 residues: Ribosomal RNA small subunit methyltransferase A (273 aa).

6 residues coordinate S-adenosyl-L-methionine: asparagine 18, leucine 20, glycine 45, glutamate 66, aspartate 91, and asparagine 113.

Belongs to the class I-like SAM-binding methyltransferase superfamily. rRNA adenine N(6)-methyltransferase family. RsmA subfamily.

The protein resides in the cytoplasm. The catalysed reaction is adenosine(1518)/adenosine(1519) in 16S rRNA + 4 S-adenosyl-L-methionine = N(6)-dimethyladenosine(1518)/N(6)-dimethyladenosine(1519) in 16S rRNA + 4 S-adenosyl-L-homocysteine + 4 H(+). Its function is as follows. Specifically dimethylates two adjacent adenosines (A1518 and A1519) in the loop of a conserved hairpin near the 3'-end of 16S rRNA in the 30S particle. May play a critical role in biogenesis of 30S subunits. This chain is Ribosomal RNA small subunit methyltransferase A, found in Salmonella choleraesuis (strain SC-B67).